A 207-amino-acid polypeptide reads, in one-letter code: Small ribosomal subunit protein uS4 (207 aa).

The S4 RNA-binding domain occupies 97–160 (SRLDNVVYRM…KKQARIVEAL (64 aa)).

Belongs to the universal ribosomal protein uS4 family. Part of the 30S ribosomal subunit. Contacts protein S5. The interaction surface between S4 and S5 is involved in control of translational fidelity.

One of the primary rRNA binding proteins, it binds directly to 16S rRNA where it nucleates assembly of the body of the 30S subunit. Functionally, with S5 and S12 plays an important role in translational accuracy. The protein is Small ribosomal subunit protein uS4 of Burkholderia mallei (strain NCTC 10247).